We begin with the raw amino-acid sequence, 501 residues long: G protein-activated inward rectifier potassium channel 1 (501 aa).

The tract at residues methionine 1–lysine 40 is disordered. Residues methionine 1–tryptophan 80 lie on the Cytoplasmic side of the membrane. Positions serine 18 to leucine 37 are enriched in low complexity. A helical membrane pass occupies residues arginine 81 to isoleucine 105. Over alanine 106–asparagine 129 the chain is Extracellular. The N-linked (GlcNAc...) asparagine glycan is linked to asparagine 119. Residues phenylalanine 130–glutamate 141 constitute an intramembrane region (helical; Pore-forming). The segment at residues alanine 142–tyrosine 148 is an intramembrane region (pore-forming). Positions threonine 143–tyrosine 148 match the Selectivity filter motif. Topologically, residues arginine 149 to glutamate 157 are extracellular. A helical membrane pass occupies residues glycine 158–cysteine 179. At methionine 180–threonine 501 the chain is on the cytoplasmic side. Positions isoleucine 182–leucine 209 are polyphosphoinositide (PIP2)-binding. A phosphoserine mark is found at serine 385 and serine 424. Residues threonine 456–valine 467 show a composition bias toward polar residues. The tract at residues threonine 456–threonine 501 is disordered.

The protein belongs to the inward rectifier-type potassium channel (TC 1.A.2.1) family. KCNJ3 subfamily. Associates with KCNJ5/GIRK4 or KCNJ6/GIRK2 to form a G-protein activated heteromultimer pore-forming unit. The resulting inward current is much larger. Associates with KCNJ9/GIRK3 to form a G-protein activated heteromultimer pore-forming unit.

The protein localises to the membrane. The enzyme catalyses K(+)(in) = K(+)(out). Heteromultimer composed of KCNJ3/GIRK1 and KCNJ5/GIRK4 is activated by phosphatidylinositol 4,5 biphosphate (PtdIns(4,5)P2). Inward rectifier potassium channels are characterized by a greater tendency to allow potassium to flow into the cell rather than out of it. Their voltage dependence is regulated by the concentration of extracellular potassium; as external potassium is raised, the voltage range of the channel opening shifts to more positive voltages. The inward rectification is mainly due to the blockage of outward current by internal magnesium. This potassium channel is controlled by G proteins. This receptor plays a crucial role in regulating the heartbeat. Forms a functional channel in association with KCNJ9/GIRK3. The protein is G protein-activated inward rectifier potassium channel 1 (Kcnj3) of Rattus norvegicus (Rat).